The following is an 802-amino-acid chain: MTRFACFLFSTLLLSFSYAAITPTSPLSIGQTLSSPNGIFELGFFSPNNSRNLYVGIWFKGIIPRTVVWVANRENSVTDATADLAISSNGSLLLFDGKHSTVWSTGETFASNGSSAELSDSGNLLVIDKVSGITLWQSFEHLGDTMLPYSSLMYNPGTGEKRVLSSWKSYTDPLPGEFVGYITTQVPPQGFIMRGSKPYWRSGPWAKTRFTGVPLTDESYTHPFSVQQDANGSVYFSHLQRNFKRSLLVLTSEGSLKVTHHNGTDWVLNIDVPANTCDFYGVCGPFGLCVMSIPPKCKCFKGFVPQFSEEWKRGNWTGGCVRRTELLCQGNSTGRHVNVFHPVANIKPPDFYEFVSSGSAEECYQSCLHNCSCLAFAYINGIGCLIWNQELMDVMQFSVGGELLSIRLASSEMGGNQRKKTIIASIVSISLFVTLASAAFGFWRYRLKHNAIVSKVSLQGAWRNDLKSEDVSGLYFFEMKTIEIATNNFSLVNKLGQGGFGPVYKGKLQDGKEIAVKRLSSSSGQGKEEFMNEILLISKLQHINLVRILGCCIEGEERLLVYEFMVNKSLDTFIFDSRKRVEIDWPKRFSIIQGIARGLLYLHRDSRLRIIHRDVKVSNILLDDKMNPKISDFGLARMYEGTKYQDNTRRIVGTLGYMSPEYAWTGVFSEKSDTYSFGVLLLEVISGEKISRFSYDKERKNLLAYAWESWCENGGVGFLDKDATDSCHPSEVGRCVQIGLLCVQHQPADRPNTLELLSMLTTTSDLPLPKEPTFAVHTSDDGSRTSDLITVNEVTQSVVLGR.

An N-terminal signal peptide occupies residues 1–19 (MTRFACFLFSTLLLSFSYA). Residues 20-139 (AITPTSPLSI…VSGITLWQSF (120 aa)) enclose the Bulb-type lectin domain. Residues 20–421 (AITPTSPLSI…EMGGNQRKKT (402 aa)) are Extracellular-facing. N-linked (GlcNAc...) asparagine glycans are attached at residues Asn-48, Asn-89, Asn-112, Asn-231, and Asn-262. The EGF-like domain maps to 273–309 (PANTCDFYGVCGPFGLCVMSIPPKCKCFKGFVPQFSE). 2 cysteine pairs are disulfide-bonded: Cys-277–Cys-289 and Cys-283–Cys-297. 3 N-linked (GlcNAc...) asparagine glycosylation sites follow: Asn-315, Asn-331, and Asn-370. Positions 328 to 410 (CQGNSTGRHV…GELLSIRLAS (83 aa)) constitute a PAN domain. Cystine bridges form between Cys-363–Cys-384 and Cys-367–Cys-373. Residues 422 to 442 (IIASIVSISLFVTLASAAFGF) traverse the membrane as a helical segment. At 443–802 (WRYRLKHNAI…EVTQSVVLGR (360 aa)) the chain is on the cytoplasmic side. One can recognise a Protein kinase domain in the interval 489-774 (FSLVNKLGQG…DLPLPKEPTF (286 aa)). Residues 495-503 (LGQGGFGPV) and Lys-517 contribute to the ATP site. Ser-523 and Ser-538 each carry phosphoserine. The caM-binding stretch occupies residues 578 to 595 (RKRVEIDWPKRFSIIQGI). The active-site Proton acceptor is the Asp-614. Ser-618 and Ser-631 each carry phosphoserine. Residue Thr-648 is modified to Phosphothreonine. Ser-691 is modified (phosphoserine).

Belongs to the protein kinase superfamily. Ser/Thr protein kinase family.

The protein resides in the cell membrane. The enzyme catalyses L-seryl-[protein] + ATP = O-phospho-L-seryl-[protein] + ADP + H(+). It carries out the reaction L-threonyl-[protein] + ATP = O-phospho-L-threonyl-[protein] + ADP + H(+). The sequence is that of G-type lectin S-receptor-like serine/threonine-protein kinase At1g61550 from Arabidopsis thaliana (Mouse-ear cress).